Reading from the N-terminus, the 991-residue chain is Translation initiation factor IF-2 (991 aa).

Disordered stretches follow at residues 58 to 82 (EGKK…GRSR) and 106 to 405 (QARA…PAPQ). The segment covering 106–164 (QARADAAASDAAPAEPAPAAAEPSASAPVTAPVNAPAADAPQAPATAAPDTAAPAAETP) has biased composition (low complexity). A compositionally biased stretch (pro residues) spans 165-175 (SQPPAVEPQPA). Low complexity-rich tracts occupy residues 190-206 (AKPA…AAVE), 221-258 (AVQA…ASKP), and 267-276 (APVPVAAPAV). Residues 279-289 (AGREEARRAAE) show a composition bias toward basic and acidic residues. Gly residues predominate over residues 379–388 (RAGGKGGKGG). Basic and acidic residues predominate over residues 395–405 (QAERRHEPAPQ). The region spanning 492–659 (PRAPVVTVMG…NVLLQAEILE (168 aa)) is the tr-type G domain. Residues 501 to 508 (GHVDHGKT) form a G1 region. 501-508 (GHVDHGKT) serves as a coordination point for GTP. The interval 526–530 (GITQH) is G2. The segment at 547–550 (DTPG) is G3. GTP is bound by residues 547–551 (DTPGH) and 601–604 (NKID). The tract at residues 601 to 604 (NKID) is G4. Residues 637-639 (SAK) form a G5 region.

Belongs to the TRAFAC class translation factor GTPase superfamily. Classic translation factor GTPase family. IF-2 subfamily.

It localises to the cytoplasm. In terms of biological role, one of the essential components for the initiation of protein synthesis. Protects formylmethionyl-tRNA from spontaneous hydrolysis and promotes its binding to the 30S ribosomal subunits. Also involved in the hydrolysis of GTP during the formation of the 70S ribosomal complex. The protein is Translation initiation factor IF-2 of Bordetella petrii (strain ATCC BAA-461 / DSM 12804 / CCUG 43448).